Reading from the N-terminus, the 330-residue chain is AH receptor-interacting protein (330 aa).

In terms of domain architecture, PPIase FKBP-type spans 31–121 (GTKATFHYRT…KDPLEGQRHC (91 aa)). S43 is subject to Phosphoserine. TPR repeat units lie at residues 179 to 212 (VPLI…LKNL), 231 to 264 (TPLL…YDDN), and 265 to 298 (VKAY…DPAL).

As to quaternary structure, interacts with RET in the pituitary gland; this interaction prevents the formation of the AIP-survivin complex. In terms of tissue distribution, widely expressed. Higher levels seen in the heart, placenta and skeletal muscle. Not expressed in the liver.

It localises to the cytoplasm. Functionally, may play a positive role in AHR-mediated (aromatic hydrocarbon receptor) signaling, possibly by influencing its receptivity for ligand and/or its nuclear targeting. Its function is as follows. Cellular negative regulator of the hepatitis B virus (HBV) X protein. This is AH receptor-interacting protein (AIP) from Homo sapiens (Human).